We begin with the raw amino-acid sequence, 209 residues long: Probable glutathione peroxidase 8-B (209 aa).

Residues 18–40 (VFLVFFSMVLCTGILCVLQLKFL) form a helical membrane-spanning segment. Residue Cys79 is part of the active site.

This sequence belongs to the glutathione peroxidase family.

Its subcellular location is the membrane. It catalyses the reaction 2 glutathione + H2O2 = glutathione disulfide + 2 H2O. In Xenopus laevis (African clawed frog), this protein is Probable glutathione peroxidase 8-B (gpx8-b).